The primary structure comprises 181 residues: Acireductone dioxygenase (181 aa).

Fe(2+) contacts are provided by histidine 98, histidine 100, glutamate 104, and histidine 142. Residues histidine 98, histidine 100, glutamate 104, and histidine 142 each contribute to the Ni(2+) site.

Belongs to the acireductone dioxygenase (ARD) family. As to quaternary structure, monomer. Fe(2+) is required as a cofactor. The cofactor is Ni(2+).

It catalyses the reaction 1,2-dihydroxy-5-(methylsulfanyl)pent-1-en-3-one + O2 = 3-(methylsulfanyl)propanoate + CO + formate + 2 H(+). The enzyme catalyses 1,2-dihydroxy-5-(methylsulfanyl)pent-1-en-3-one + O2 = 4-methylsulfanyl-2-oxobutanoate + formate + 2 H(+). It participates in amino-acid biosynthesis; L-methionine biosynthesis via salvage pathway; L-methionine from S-methyl-5-thio-alpha-D-ribose 1-phosphate: step 5/6. Its function is as follows. Catalyzes 2 different reactions between oxygen and the acireductone 1,2-dihydroxy-3-keto-5-methylthiopentene (DHK-MTPene) depending upon the metal bound in the active site. Fe-containing acireductone dioxygenase (Fe-ARD) produces formate and 2-keto-4-methylthiobutyrate (KMTB), the alpha-ketoacid precursor of methionine in the methionine recycle pathway. Ni-containing acireductone dioxygenase (Ni-ARD) produces methylthiopropionate, carbon monoxide and formate, and does not lie on the methionine recycle pathway. This chain is Acireductone dioxygenase, found in Alcanivorax borkumensis (strain ATCC 700651 / DSM 11573 / NCIMB 13689 / SK2).